Reading from the N-terminus, the 548-residue chain is Chaperonin GroEL (548 aa).

ATP contacts are provided by residues 30-33 (TLGP), Lys-51, 87-91 (DGTTT), Gly-415, and Asp-496.

The protein belongs to the chaperonin (HSP60) family. As to quaternary structure, forms a cylinder of 14 subunits composed of two heptameric rings stacked back-to-back. Interacts with the co-chaperonin GroES.

The protein localises to the cytoplasm. The enzyme catalyses ATP + H2O + a folded polypeptide = ADP + phosphate + an unfolded polypeptide.. Its function is as follows. Together with its co-chaperonin GroES, plays an essential role in assisting protein folding. The GroEL-GroES system forms a nano-cage that allows encapsulation of the non-native substrate proteins and provides a physical environment optimized to promote and accelerate protein folding. This chain is Chaperonin GroEL, found in Haemophilus influenzae (strain ATCC 51907 / DSM 11121 / KW20 / Rd).